A 603-amino-acid chain; its full sequence is Serine/threonine-protein kinase PLK1 (603 aa).

The disordered stretch occupies residues 1 to 35 (MSAAVTAGKLARAPADPGKAGVPGVAAPGAPAAAP). Serine 2 carries the post-translational modification N-acetylserine. Threonine 6 bears the Phosphothreonine mark. Residues 13–35 (APADPGKAGVPGVAAPGAPAAAP) show a composition bias toward low complexity. Residue lysine 19 forms a Glycyl lysine isopeptide (Lys-Gly) (interchain with G-Cter in ubiquitin) linkage. One can recognise a Protein kinase domain in the interval 53-305 (YVRGRFLGKG…INELLNDEFF (253 aa)). ATP is bound by residues 59 to 67 (LGKGGFAKC) and lysine 82. Serine 103 carries the post-translational modification Phosphoserine. Position 131 (glutamate 131) interacts with ATP. Phosphoserine is present on serine 137. Residue aspartate 176 is the Proton acceptor of the active site. ATP-binding positions include 178–181 (KLGN) and aspartate 194. The activation loop stretch occupies residues 194-221 (DFGLATKVEYDGERKKTLCGTPNYIAPE). The residue at position 210 (threonine 210) is a Phosphothreonine; by AURKA. At threonine 214 the chain carries Phosphothreonine. Residue serine 269 is modified to Phosphoserine; by autocatalysis. Serine 335 bears the Phosphoserine mark. A D-box that targets the protein for proteasomal degradation in anaphase motif is present at residues 337-340 (RKPL). Lysine 338 participates in a covalent cross-link: Glycyl lysine isopeptide (Lys-Gly) (interchain with G-Cter in SUMO2). The disordered stretch occupies residues 338 to 364 (KPLTVLNKGLENPLPERPREKEEPVVR). Residues 351-364 (LPERPREKEEPVVR) are compositionally biased toward basic and acidic residues. Residues serine 375 and serine 450 each carry the phosphoserine modification. A POLO box 1 domain is found at 410 to 488 (WVSKWVDYSD…LKYFRNYMSE (79 aa)). A Glycyl lysine isopeptide (Lys-Gly) (interchain with G-Cter in ubiquitin) cross-link involves residue lysine 492. The tract at residues 493 to 507 (AGANITPREGDELAR) is linker. Phosphothreonine is present on threonine 498. A POLO box 2 domain is found at 510–592 (YLRTWFRTRS…ARTMVDKLLS (83 aa)). The segment at 538-540 (HTK) is important for interaction with phosphorylated proteins.

This sequence belongs to the protein kinase superfamily. Ser/Thr protein kinase family. CDC5/Polo subfamily. Interacts with CEP170. Interacts with EVI5. Interacts with FAM29A. Interacts with SLX4/BTBD12. Interacts with TTDN1. Interacts (via POLO-box domain) with the phosphorylated form of BUB1, CDC25C and CENPU. Interacts with KIF2A. Interacts with CYLD. Part of an astrin (SPAG5)-kinastrin (SKAP) complex containing KNSTRN, SPAG5, PLK1, DYNLL1 and SGO2. Interacts with BIRC6/bruce. Interacts with CDK1-phosphorylated FRY; this interaction occurs in mitotic cells, but not in interphase cells. FRY interaction facilitates AURKA-mediated PLK1 phosphorylation. Interacts with CDK1-phosphorylated DCTN6 during mitotic prometaphase; the interaction facilitates recruitment to kinetochores. Interacts with CEP68; the interaction phosphorylates CEP68. Interacts (via POLO-box domain) with DCTN1. Interacts with CEP20 in later G1, S, G2 and M phases of the cell cycle; this interaction recruits PLK1 to centrosomes, a step required for S phase progression. Interacts with KLHL22. Interacts (via POLO box domains) with NEDD9/HEF1 (via C-terminus). Interacts with FIRRM (via N-terminus region); required for maintaining, but not activating, PLK1 kinase activity. Interacts with FZR1. Interacts with SKA3; the interaction promotes the stability of PLK1; the interaction promotes the stability of PLK1. Interacts with the MTMR3:MTMR4 heterooligomer; brings CEP55 and PLK1 together during early mitosis, regulating the phosphorylation of CEP55 by PLK1 and its recruitment to the midbody where it can mediate cell abscission. In terms of processing, catalytic activity is enhanced by phosphorylation of Thr-210. Phosphorylation at Thr-210 is first detected on centrosomes in the G2 phase of the cell cycle, peaks in prometaphase and gradually disappears from centrosomes during anaphase. Dephosphorylation at Thr-210 at centrosomes is probably mediated by protein phosphatase 1C (PP1C), via interaction with PPP1R12A/MYPT1. Autophosphorylation and phosphorylation of Ser-137 may not be significant for the activation of PLK1 during mitosis, but may enhance catalytic activity during recovery after DNA damage checkpoint. Phosphorylated in vitro by STK10. Ubiquitinated by the anaphase promoting complex/cyclosome (APC/C) in anaphase and following DNA damage, leading to its degradation by the proteasome. Ubiquitination is mediated via its interaction with FZR1/CDH1. Ubiquitination and subsequent degradation prevents entry into mitosis and is essential to maintain an efficient G2 DNA damage checkpoint. Monoubiquitination at Lys-492 by the BCR(KLHL22) ubiquitin ligase complex does not lead to degradation: it promotes PLK1 dissociation from phosphoreceptor proteins and subsequent removal from kinetochores, allowing silencing of the spindle assembly checkpoint (SAC) and chromosome segregation. Placenta and colon.

It is found in the nucleus. It localises to the chromosome. The protein localises to the centromere. The protein resides in the kinetochore. Its subcellular location is the cytoplasm. It is found in the cytoskeleton. It localises to the microtubule organizing center. The protein localises to the centrosome. The protein resides in the spindle. Its subcellular location is the midbody. It carries out the reaction L-seryl-[protein] + ATP = O-phospho-L-seryl-[protein] + ADP + H(+). It catalyses the reaction L-threonyl-[protein] + ATP = O-phospho-L-threonyl-[protein] + ADP + H(+). Activated by phosphorylation of Thr-210 by AURKA; phosphorylation by AURKA is enhanced by BORA. Once activated, activity is stimulated by binding target proteins. Binding of target proteins has no effect on the non-activated kinase. Several inhibitors targeting PLKs are currently in development and are under investigation in a growing number of clinical trials, such as BI 2536, an ATP-competitive PLK1 inhibitor or BI 6727, a dihydropteridinone that specifically inhibits the catalytic activity of PLK1. Functionally, serine/threonine-protein kinase that performs several important functions throughout M phase of the cell cycle, including the regulation of centrosome maturation and spindle assembly, the removal of cohesins from chromosome arms, the inactivation of anaphase-promoting complex/cyclosome (APC/C) inhibitors, and the regulation of mitotic exit and cytokinesis. Polo-like kinase proteins act by binding and phosphorylating proteins that are already phosphorylated on a specific motif recognized by the POLO box domains. Phosphorylates BORA, BUB1B/BUBR1, CCNB1, CDC25C, CEP55, ECT2, ERCC6L, FBXO5/EMI1, FOXM1, KIF20A/MKLP2, CENPU, NEDD1, NINL, NPM1, NUDC, PKMYT1/MYT1, KIZ, MRE11, PPP1R12A/MYPT1, POLQ, PRC1, RACGAP1/CYK4, RAD51, RHNO1, SGO1, STAG2/SA2, TEX14, TOPORS, p73/TP73, TPT1, WEE1 and HNRNPU. Plays a key role in centrosome functions and the assembly of bipolar spindles by phosphorylating KIZ, NEDD1 and NINL. NEDD1 phosphorylation promotes subsequent targeting of the gamma-tubulin ring complex (gTuRC) to the centrosome, an important step for spindle formation. Phosphorylation of NINL component of the centrosome leads to NINL dissociation from other centrosomal proteins. Involved in mitosis exit and cytokinesis by phosphorylating CEP55, ECT2, KIF20A/MKLP2, CENPU, PRC1 and RACGAP1. Recruited at the central spindle by phosphorylating and docking PRC1 and KIF20A/MKLP2; creates its own docking sites on PRC1 and KIF20A/MKLP2 by mediating phosphorylation of sites subsequently recognized by the POLO box domains. Phosphorylates RACGAP1, thereby creating a docking site for the Rho GTP exchange factor ECT2 that is essential for the cleavage furrow formation. Promotes the central spindle recruitment of ECT2. Plays a central role in G2/M transition of mitotic cell cycle by phosphorylating CCNB1, CDC25C, FOXM1, CENPU, PKMYT1/MYT1, PPP1R12A/MYPT1 and WEE1. Part of a regulatory circuit that promotes the activation of CDK1 by phosphorylating the positive regulator CDC25C and inhibiting the negative regulators WEE1 and PKMYT1/MYT1. Also acts by mediating phosphorylation of cyclin-B1 (CCNB1) on centrosomes in prophase. Phosphorylates FOXM1, a key mitotic transcription regulator, leading to enhance FOXM1 transcriptional activity. Involved in kinetochore functions and sister chromatid cohesion by phosphorylating BUB1B/BUBR1, FBXO5/EMI1 and STAG2/SA2. PLK1 is high on non-attached kinetochores suggesting a role of PLK1 in kinetochore attachment or in spindle assembly checkpoint (SAC) regulation. Required for kinetochore localization of BUB1B. Regulates the dissociation of cohesin from chromosomes by phosphorylating cohesin subunits such as STAG2/SA2. Phosphorylates SGO1: required for spindle pole localization of isoform 3 of SGO1 and plays a role in regulating its centriole cohesion function. Mediates phosphorylation of FBXO5/EMI1, a negative regulator of the APC/C complex during prophase, leading to FBXO5/EMI1 ubiquitination and degradation by the proteasome. Acts as a negative regulator of p53 family members: phosphorylates TOPORS, leading to inhibit the sumoylation of p53/TP53 and simultaneously enhance the ubiquitination and subsequent degradation of p53/TP53. Phosphorylates the transactivation domain of the transcription factor p73/TP73, leading to inhibit p73/TP73-mediated transcriptional activation and pro-apoptotic functions. Phosphorylates BORA, and thereby promotes the degradation of BORA. Contributes to the regulation of AURKA function. Also required for recovery after DNA damage checkpoint and entry into mitosis. Phosphorylates MISP, leading to stabilization of cortical and astral microtubule attachments required for proper spindle positioning. Together with MEIKIN, acts as a regulator of kinetochore function during meiosis I: required both for mono-orientation of kinetochores on sister chromosomes and protection of centromeric cohesin from separase-mediated cleavage. Phosphorylates CEP68 and is required for its degradation. Regulates nuclear envelope breakdown during prophase by phosphorylating DCTN1 resulting in its localization in the nuclear envelope. Phosphorylates the heat shock transcription factor HSF1, promoting HSF1 nuclear translocation upon heat shock. Phosphorylates HSF1 also in the early mitotic period; this phosphorylation regulates HSF1 localization to the spindle pole, the recruitment of the SCF(BTRC) ubiquitin ligase complex induicing HSF1 degradation, and hence mitotic progression. Regulates mitotic progression by phosphorylating RIOK2. Through the phosphorylation of DZIP1 regulates the localization during mitosis of the BBSome, a ciliary protein complex involved in cilium biogenesis. Regulates DNA repair during mitosis by mediating phosphorylation of POLQ and RHNO1, thereby promoting POLQ recruitment to DNA damage sites. Phosphorylates ATXN10 which may play a role in the regulation of cytokinesis and may stimulate the proteasome-mediated degradation of ATXN10. The sequence is that of Serine/threonine-protein kinase PLK1 (PLK1) from Homo sapiens (Human).